The sequence spans 213 residues: Adenylate kinase (213 aa).

14–19 (GSGKGT) is a binding site for ATP. Positions 34–63 (SSGNLLRSAIKASTPLGIKASEYIDEGQLV) are NMP. Residues Ser35, Arg40, 61–63 (QLV), 89–92 (GFPR), and Gln96 contribute to the AMP site. Positions 129–162 (SRFICPSCNFVYNQSQGFRECPTCHSELVRRSDD) are LID. ATP is bound at residue Arg130. 2 residues coordinate Zn(2+): Cys133 and Cys136. ATP is bound at residue 139–140 (VY). Zn(2+) contacts are provided by Cys149 and Cys152. The AMP site is built by Arg159 and Arg170. Lys198 lines the ATP pocket.

The protein belongs to the adenylate kinase family. In terms of assembly, monomer.

The protein resides in the cytoplasm. The enzyme catalyses AMP + ATP = 2 ADP. Its pathway is purine metabolism; AMP biosynthesis via salvage pathway; AMP from ADP: step 1/1. In terms of biological role, catalyzes the reversible transfer of the terminal phosphate group between ATP and AMP. Plays an important role in cellular energy homeostasis and in adenine nucleotide metabolism. This Chlamydia felis (strain Fe/C-56) (Chlamydophila felis) protein is Adenylate kinase.